Consider the following 416-residue polypeptide: Tryptophan synthase beta chain (416 aa).

Position 109 is an N6-(pyridoxal phosphate)lysine (Lys-109).

The protein belongs to the TrpB family. Tetramer of two alpha and two beta chains. It depends on pyridoxal 5'-phosphate as a cofactor.

The catalysed reaction is (1S,2R)-1-C-(indol-3-yl)glycerol 3-phosphate + L-serine = D-glyceraldehyde 3-phosphate + L-tryptophan + H2O. It participates in amino-acid biosynthesis; L-tryptophan biosynthesis; L-tryptophan from chorismate: step 5/5. The beta subunit is responsible for the synthesis of L-tryptophan from indole and L-serine. The sequence is that of Tryptophan synthase beta chain from Prochlorococcus marinus (strain SARG / CCMP1375 / SS120).